The chain runs to 616 residues: Chaperone protein HscA (616 aa).

This sequence belongs to the heat shock protein 70 family.

In terms of biological role, chaperone involved in the maturation of iron-sulfur cluster-containing proteins. Has a low intrinsic ATPase activity which is markedly stimulated by HscB. Involved in the maturation of IscU. The protein is Chaperone protein HscA of Escherichia coli (strain SMS-3-5 / SECEC).